Here is a 347-residue protein sequence, read N- to C-terminus: 3',5'-bisphosphate nucleotidase 2 (347 aa).

The active-site Proton acceptor is D46. Mg(2+)-binding residues include E71, D134, I136, and D137. The Proton acceptor role is filled by T139. Residues T139, S255, K258, R272, and D284 each coordinate adenosine 3',5'-bisphosphate. Residues S255, K258, R272, and D284 each coordinate AMP. D284 is a binding site for Mg(2+).

It belongs to the inositol monophosphatase superfamily. The cofactor is Mg(2+). In terms of tissue distribution, very low expression in roots, leaves, stems, flowers and siliques.

The catalysed reaction is adenosine 3',5'-bisphosphate + H2O = AMP + phosphate. It catalyses the reaction 3'-phosphoadenylyl sulfate + H2O = adenosine 5'-phosphosulfate + phosphate. The enzyme catalyses 1D-myo-inositol 1,4-bisphosphate + H2O = 1D-myo-inositol 4-phosphate + phosphate. It functions in the pathway signal transduction; phosphatidylinositol signaling pathway. With respect to regulation, inhibited by Li(+) (IC(50)=10 mM), Na(+) (IC(50)=200 mM) and Ca(2+) (IC(50)=0.03 mM). Phosphatase that converts adenosine 3'-phosphate 5'-phosphosulfate (PAPS) to adenosine 5'-phosphosulfate (APS) and 3'-phosphoadenosine 5'-phosphate (3'-PAP) to AMP. May regulate the flux of sulfur in the sulfur-activation pathway by converting PAPS to APS. Prevents both the toxicity of PAP on RNA processing enzymes as well as the product inhibition by PAP of sulfate conjugation. Is also able to hydrolyze inositol 1,4-bisphosphate. The polypeptide is 3',5'-bisphosphate nucleotidase 2 (Arabidopsis thaliana (Mouse-ear cress)).